Reading from the N-terminus, the 452-residue chain is tRNA modification GTPase MnmE (452 aa).

Residues arginine 22, glutamate 80, and lysine 119 each contribute to the (6S)-5-formyl-5,6,7,8-tetrahydrofolate site. A TrmE-type G domain is found at 213-375 (GVRTVIVGKP…LENKIYEKFF (163 aa)). A K(+)-binding site is contributed by asparagine 223. Residues 223-228 (NSGKST), 242-248 (TDIPGTT), and 267-270 (DTAG) contribute to the GTP site. Serine 227 serves as a coordination point for Mg(2+). The K(+) site is built by threonine 242, isoleucine 244, and threonine 247. Threonine 248 provides a ligand contact to Mg(2+). Lysine 452 contributes to the (6S)-5-formyl-5,6,7,8-tetrahydrofolate binding site.

It belongs to the TRAFAC class TrmE-Era-EngA-EngB-Septin-like GTPase superfamily. TrmE GTPase family. Homodimer. Heterotetramer of two MnmE and two MnmG subunits. K(+) is required as a cofactor.

It localises to the cytoplasm. In terms of biological role, exhibits a very high intrinsic GTPase hydrolysis rate. Involved in the addition of a carboxymethylaminomethyl (cmnm) group at the wobble position (U34) of certain tRNAs, forming tRNA-cmnm(5)s(2)U34. This Petrotoga mobilis (strain DSM 10674 / SJ95) protein is tRNA modification GTPase MnmE.